The sequence spans 263 residues: Norsolorinic acid ketoreductase stcE (263 aa).

7 residues coordinate NADP(+): Leu29, Asp76, Asn105, Tyr177, Lys181, Ile208, and Ser210. The Proton donor role is filled by Tyr177. Residue Lys181 is the Lowers pKa of active site Tyr of the active site.

Belongs to the short-chain dehydrogenases/reductases (SDR) family.

It carries out the reaction (1'S)-averantin + NADP(+) = norsolorinic acid + NADPH + H(+). It participates in mycotoxin biosynthesis; sterigmatocystin biosynthesis. In terms of biological role, short chain dehydrogenase; part of the gene cluster that mediates the biosynthesis of sterigmatocystin (ST), a polyketide-derived furanocoumarin which is part of the most toxic and carcinogenic compounds among the known mycotoxins. The first step in the biosynthesis of sterigmatocystin is the production of hexanoate by the fatty acid synthase (FAS) units stcJ and stcK. The polyketide backbone is assembled by the non-reducing polyketide synthase stcA by condensation of the starter hexanoyl-CoA and 7 malonyl-CoA extender units followed by cyclization and release of norsolorinic acid. Norsolorinic acid is the first stable intermediate in the biosynthesis of sterigmatocystin and is converted into averantin (AVN) by the ketoreductase stcE which reduces the hexanoate ketone to an alcohol. Averantin is then oxidized into 5'-hydroxyaverantin (HAVN) by the cytochrome P450 monooxygenase stcF. 5'-hydroxyaverantin is further converted to 5'-oxyaverantin (OAVN) by the 5'-hydroxyaverantin dehydrogenase stcG. The next step is the conversion of OAVN into averufin (AVF) which is catalyzed by a yet to be identified enzyme. The cytochrome P450 monooxygenase stcB and the flavin-binding monooxygenase stcW are both required for the conversion of averufin to 1-hydroxyversicolorone. The esterase stcI probably catalyzes the formation of versiconal hemiacetal acetate from 1-hydroxyversicolorone. The oxydoreductase stcN then probably catalyzes the biosynthetic step from versiconal to versicolorin B (VERB). The next step is performed by the versicolorin B desaturase stcL to produce versicolorin A (VERA). The ketoreductase stcU and the cytochrome P450 monooxygenase stcS are involved in the conversion of versicolorin A to demethylsterigmatocystin. The Baeyer-Villiger oxidas stcQ and the reductase stcR might be involved in the biosynthetic step from versicolorin A to demethylsterigmatocystin. The final step in the biosynthesis of sterigmatocystin is the methylation of demethylsterigmatocystin catalyzed by the methyltransferase stcP. The sequence is that of Norsolorinic acid ketoreductase stcE from Emericella nidulans (strain FGSC A4 / ATCC 38163 / CBS 112.46 / NRRL 194 / M139) (Aspergillus nidulans).